The primary structure comprises 313 residues: Ribonuclease HIII (313 aa).

The region spanning 94 to 310 (MSVIGSDEVG…TQKAKRLVER (217 aa)) is the RNase H type-2 domain. Residues aspartate 100, glutamate 101, and aspartate 205 each coordinate a divalent metal cation.

It belongs to the RNase HII family. RnhC subfamily. Requires Mn(2+) as cofactor. It depends on Mg(2+) as a cofactor.

The protein resides in the cytoplasm. The catalysed reaction is Endonucleolytic cleavage to 5'-phosphomonoester.. Its function is as follows. Endonuclease that specifically degrades the RNA of RNA-DNA hybrids. The protein is Ribonuclease HIII of Bacillus velezensis (strain DSM 23117 / BGSC 10A6 / LMG 26770 / FZB42) (Bacillus amyloliquefaciens subsp. plantarum).